Consider the following 449-residue polypeptide: Probable glycine dehydrogenase (decarboxylating) subunit 1 (449 aa).

Belongs to the GcvP family. N-terminal subunit subfamily. The glycine cleavage system is composed of four proteins: P, T, L and H. In this organism, the P 'protein' is a heterodimer of two subunits.

It carries out the reaction N(6)-[(R)-lipoyl]-L-lysyl-[glycine-cleavage complex H protein] + glycine + H(+) = N(6)-[(R)-S(8)-aminomethyldihydrolipoyl]-L-lysyl-[glycine-cleavage complex H protein] + CO2. Its function is as follows. The glycine cleavage system catalyzes the degradation of glycine. The P protein binds the alpha-amino group of glycine through its pyridoxal phosphate cofactor; CO(2) is released and the remaining methylamine moiety is then transferred to the lipoamide cofactor of the H protein. In Sulfurisphaera tokodaii (strain DSM 16993 / JCM 10545 / NBRC 100140 / 7) (Sulfolobus tokodaii), this protein is Probable glycine dehydrogenase (decarboxylating) subunit 1.